We begin with the raw amino-acid sequence, 77 residues long: Antitoxin VapB2 (77 aa).

The SpoVT-AbrB domain maps to A4–Q46.

It belongs to the VapB family. As to quaternary structure, probably forms a complex with cognate toxin VapC2.

Functionally, antitoxin component of a type II toxin-antitoxin (TA) system. Neutralizes the effect of cognate toxin VapC2 but not non-cognate toxin VapC2. In Haemophilus influenzae (strain 86-028NP), this protein is Antitoxin VapB2.